The chain runs to 127 residues: Aspartate 1-decarboxylase (127 aa).

Serine 25 acts as the Schiff-base intermediate with substrate; via pyruvic acid in catalysis. Residue serine 25 is modified to Pyruvic acid (Ser). A substrate-binding site is contributed by threonine 57. Tyrosine 58 serves as the catalytic Proton donor. Substrate is bound at residue 73 to 75; it reads GAA.

Belongs to the PanD family. As to quaternary structure, heterooctamer of four alpha and four beta subunits. It depends on pyruvate as a cofactor. In terms of processing, is synthesized initially as an inactive proenzyme, which is activated by self-cleavage at a specific serine bond to produce a beta-subunit with a hydroxyl group at its C-terminus and an alpha-subunit with a pyruvoyl group at its N-terminus.

It is found in the cytoplasm. It carries out the reaction L-aspartate + H(+) = beta-alanine + CO2. It participates in cofactor biosynthesis; (R)-pantothenate biosynthesis; beta-alanine from L-aspartate: step 1/1. In terms of biological role, catalyzes the pyruvoyl-dependent decarboxylation of aspartate to produce beta-alanine. The sequence is that of Aspartate 1-decarboxylase from Bacillus cereus (strain G9842).